Consider the following 297-residue polypeptide: Mycothiol acetyltransferase (297 aa).

Glutamate 35 lines the 1D-myo-inositol 2-(L-cysteinylamino)-2-deoxy-alpha-D-glucopyranoside pocket. Residue 73–75 (MLV) coordinates acetyl-CoA. The N-acetyltransferase domain occupies 155–297 (LRTFGGTEAE…VAVHAQYGIP (143 aa)). 3 residues coordinate 1D-myo-inositol 2-(L-cysteinylamino)-2-deoxy-alpha-D-glucopyranoside: glutamate 181, lysine 222, and glutamate 230. Acetyl-CoA contacts are provided by residues 234–236 (LGV) and 241–247 (QGRGLGR). Tyrosine 268 provides a ligand contact to 1D-myo-inositol 2-(L-cysteinylamino)-2-deoxy-alpha-D-glucopyranoside.

This sequence belongs to the acetyltransferase family. MshD subfamily. In terms of assembly, monomer.

The enzyme catalyses 1D-myo-inositol 2-(L-cysteinylamino)-2-deoxy-alpha-D-glucopyranoside + acetyl-CoA = mycothiol + CoA + H(+). Catalyzes the transfer of acetyl from acetyl-CoA to desacetylmycothiol (Cys-GlcN-Ins) to form mycothiol. The protein is Mycothiol acetyltransferase of Beutenbergia cavernae (strain ATCC BAA-8 / DSM 12333 / CCUG 43141 / JCM 11478 / NBRC 16432 / NCIMB 13614 / HKI 0122).